Reading from the N-terminus, the 130-residue chain is Chaperone protein SycT (130 aa).

As to quaternary structure, binds to YopT.

Functions as a specific chaperone for YopT. This chain is Chaperone protein SycT (sycT), found in Yersinia enterocolitica serotype O:8 / biotype 1B (strain NCTC 13174 / 8081).